The primary structure comprises 355 residues: Epoxide hydrolase 2 (355 aa).

Residues 78 to 323 (VLLMVHGFPE…IRGASHWVQQ (246 aa)) form the AB hydrolase-1 domain. Catalysis depends on Asp-152, which acts as the Nucleophile. Tyr-263 (proton donor) is an active-site residue. His-319 functions as the Proton acceptor in the catalytic mechanism.

This sequence belongs to the AB hydrolase superfamily. Epoxide hydrolase family.

The catalysed reaction is an epoxide + H2O = an ethanediol. Its pathway is lipid metabolism. Catalyzes the hydrolysis of epoxide-containing fatty acids. Active in vitro against trans-1,3-diphenylpropene oxide (t-DPPO), epoxyeicosatrienoic acids (EETs) including 8,9-EET, 11,12-EET and 14,15-EET and the linoleic acid metabolites 12,13-epoxy-9-octadecenoate (12,13-EpOME) and 9,10-epoxy-12-octadecenoate (9,10-EpOME). This Caenorhabditis elegans protein is Epoxide hydrolase 2.